We begin with the raw amino-acid sequence, 352 residues long: Selenide, water dikinase (352 aa).

The active site involves Cys23. Residues Lys26 and 54–56 each bind ATP; that span reads SRD. Asp57 is a Mg(2+) binding site. Residues Asp74, Asp97, and 145 to 147 each bind ATP; that span reads GHS. Asp97 lines the Mg(2+) pocket. Residue Asp233 participates in Mg(2+) binding.

The protein belongs to the selenophosphate synthase 1 family. Class I subfamily. Homodimer. It depends on Mg(2+) as a cofactor.

The catalysed reaction is hydrogenselenide + ATP + H2O = selenophosphate + AMP + phosphate + 2 H(+). Its function is as follows. Synthesizes selenophosphate from selenide and ATP. This is Selenide, water dikinase from Shewanella sp. (strain ANA-3).